The sequence spans 378 residues: 4-hydroxy-3-methylbut-2-en-1-yl diphosphate synthase (flavodoxin) (378 aa).

Residues C268, C271, C303, and E310 each contribute to the [4Fe-4S] cluster site.

The protein belongs to the IspG family. The cofactor is [4Fe-4S] cluster.

It catalyses the reaction (2E)-4-hydroxy-3-methylbut-2-enyl diphosphate + oxidized [flavodoxin] + H2O + 2 H(+) = 2-C-methyl-D-erythritol 2,4-cyclic diphosphate + reduced [flavodoxin]. It functions in the pathway isoprenoid biosynthesis; isopentenyl diphosphate biosynthesis via DXP pathway; isopentenyl diphosphate from 1-deoxy-D-xylulose 5-phosphate: step 5/6. Converts 2C-methyl-D-erythritol 2,4-cyclodiphosphate (ME-2,4cPP) into 1-hydroxy-2-methyl-2-(E)-butenyl 4-diphosphate. This chain is 4-hydroxy-3-methylbut-2-en-1-yl diphosphate synthase (flavodoxin), found in Corynebacterium glutamicum (strain ATCC 13032 / DSM 20300 / JCM 1318 / BCRC 11384 / CCUG 27702 / LMG 3730 / NBRC 12168 / NCIMB 10025 / NRRL B-2784 / 534).